Consider the following 578-residue polypeptide: A-type ATP synthase subunit A (578 aa).

Gly228–Thr235 serves as a coordination point for ATP.

Belongs to the ATPase alpha/beta chains family. As to quaternary structure, has multiple subunits with at least A(3), B(3), C, D, E, F, H, I and proteolipid K(x).

The protein localises to the cell membrane. The catalysed reaction is ATP + H2O + 4 H(+)(in) = ADP + phosphate + 5 H(+)(out). Functionally, component of the A-type ATP synthase that produces ATP from ADP in the presence of a proton gradient across the membrane. The A chain is the catalytic subunit. This is A-type ATP synthase subunit A from Methanosarcina barkeri (strain Fusaro / DSM 804).